The following is a 320-amino-acid chain: Transcription termination/antitermination protein NusG (320 aa).

The protein belongs to the NusG family.

Its function is as follows. Participates in transcription elongation, termination and antitermination. In Mycoplasma pneumoniae (strain ATCC 29342 / M129 / Subtype 1) (Mycoplasmoides pneumoniae), this protein is Transcription termination/antitermination protein NusG.